A 578-amino-acid polypeptide reads, in one-letter code: Membrane protein insertase YidC (578 aa).

Residues 3-23 (IQRSILIVALAVVSYLLVLQW) traverse the membrane as a helical segment. Residues 34–71 (AASASMNTTQGLPDTPSAAGTSSDVPTAQSGAAGSEAA) form a disordered region. Residues 37 to 65 (ASMNTTQGLPDTPSAAGTSSDVPTAQSGA) show a composition bias toward polar residues. Helical transmembrane passes span 361–381 (LELTVDYGFLWFIAQPIFWLL), 387–407 (LIGNWGWSIIALTVLIKLAFF), 457–477 (LGGCLPILVQMPVFLSLYWVL), 500–520 (PFFILPIVMGGTMLIQQMLNP), and 535–555 (PIIFTFFFLWFPAGLVLYWVV).

This sequence belongs to the OXA1/ALB3/YidC family. Type 1 subfamily. In terms of assembly, interacts with the Sec translocase complex via SecD. Specifically interacts with transmembrane segments of nascent integral membrane proteins during membrane integration.

It localises to the cell inner membrane. Its function is as follows. Required for the insertion and/or proper folding and/or complex formation of integral membrane proteins into the membrane. Involved in integration of membrane proteins that insert both dependently and independently of the Sec translocase complex, as well as at least some lipoproteins. Aids folding of multispanning membrane proteins. In Pseudomonas paraeruginosa (strain DSM 24068 / PA7) (Pseudomonas aeruginosa (strain PA7)), this protein is Membrane protein insertase YidC.